A 507-amino-acid polypeptide reads, in one-letter code: Histidine ammonia-lyase (507 aa).

The segment at residues 141-143 (ASG) is a cross-link (5-imidazolinone (Ala-Gly)). Ser-142 carries the 2,3-didehydroalanine (Ser) modification.

Belongs to the PAL/histidase family. Contains an active site 4-methylidene-imidazol-5-one (MIO), which is formed autocatalytically by cyclization and dehydration of residues Ala-Ser-Gly.

The protein resides in the cytoplasm. It carries out the reaction L-histidine = trans-urocanate + NH4(+). The protein operates within amino-acid degradation; L-histidine degradation into L-glutamate; N-formimidoyl-L-glutamate from L-histidine: step 1/3. The polypeptide is Histidine ammonia-lyase (Burkholderia mallei (strain NCTC 10247)).